An 808-amino-acid polypeptide reads, in one-letter code: Protein translocase subunit SecA 2 (808 aa).

ATP contacts are provided by residues Q124, 142-146 (GEGKT), and D535.

Belongs to the SecA family. As to quaternary structure, monomer and homodimer. Part of the essential Sec protein translocation apparatus which comprises SecA, SecYEG and auxiliary proteins SecDF. Other proteins may also be involved.

Its subcellular location is the cell membrane. The protein localises to the cytoplasm. The catalysed reaction is ATP + H2O + cellular proteinSide 1 = ADP + phosphate + cellular proteinSide 2.. Its function is as follows. Part of the Sec protein translocase complex. Interacts with the SecYEG preprotein conducting channel. Has a central role in coupling the hydrolysis of ATP to the transfer of proteins into and across the cell membrane, serving as an ATP-driven molecular motor driving the stepwise translocation of polypeptide chains across the membrane. The protein is Protein translocase subunit SecA 2 of Mycobacterium bovis (strain BCG / Pasteur 1173P2).